The primary structure comprises 326 residues: Putative HTH-type transcriptional regulator y4qH (326 aa).

In terms of domain architecture, HTH luxR-type spans 257–322 (AVQKIPALSL…VAAIKAISLG (66 aa)). A DNA-binding region (H-T-H motif) is located at residues 281-300 (SWDIGVIMRISENTVNFHIK).

The protein belongs to the autoinducer-regulated transcriptional regulatory protein family.

This Sinorhizobium fredii (strain NBRC 101917 / NGR234) protein is Putative HTH-type transcriptional regulator y4qH.